The primary structure comprises 180 residues: Virion protein US10 homolog (180 aa).

It belongs to the herpesviridae US10 family. Phosphorylated.

Its subcellular location is the virion tegument. The protein localises to the host nucleus matrix. This Varicella-zoster virus (strain Dumas) (HHV-3) protein is Virion protein US10 homolog (64).